We begin with the raw amino-acid sequence, 301 residues long: Immune-associated nucleotide-binding protein 5 (301 aa).

The AIG1-type G domain maps to 11–214; that stretch reads EPVRNIVLVG…FTEENDLNEK (204 aa). The G1 stretch occupies residues 20–27; the sequence is GPTGNGKS. 20–28 is a binding site for GTP; the sequence is GPTGNGKSS. The interval 46–50 is G2; it reads CKTCK. A G3 region spans residues 63-66; that stretch reads DTPG. The G4 stretch occupies residues 133 to 136; it reads TGGD. The segment at 172-174 is G5; it reads NNK. A GTP-binding site is contributed by asparagine 173.

Belongs to the TRAFAC class TrmE-Era-EngA-EngB-Septin-like GTPase superfamily. AIG1/Toc34/Toc159-like paraseptin GTPase family. IAN subfamily. Expressed in pollen, cotyledons and lateral roots.

This chain is Immune-associated nucleotide-binding protein 5, found in Arabidopsis thaliana (Mouse-ear cress).